The following is a 398-amino-acid chain: ATP-dependent RNA helicase eIF4A (398 aa).

A Q motif motif is present at residues 25-53; it reads DSFDAMNLRAELLRGVYAYGFERPSAIQQ. Residues 56-226 form the Helicase ATP-binding domain; that stretch reads IMPVIKGSDV…TKFMRDPVRI (171 aa). Residue 69-76 coordinates ATP; it reads AQSGTGKT. Residues 174 to 177 carry the DEAD box motif; it reads DEAD. A Helicase C-terminal domain is found at 237–398; sequence GIKQFYIAVE…EMPMNVADLI (162 aa).

It belongs to the DEAD box helicase family. eIF4A subfamily. As to quaternary structure, component of the eIF4F complex, which composition varies with external and internal environmental conditions. It is composed of at least eIF4A, eIF4E and eIF4G.

The protein resides in the cytoplasm. The catalysed reaction is ATP + H2O = ADP + phosphate + H(+). ATP-dependent RNA helicase which is a subunit of the eIF4F complex involved in cap recognition and is required for mRNA binding to ribosome. In the current model of translation initiation, eIF4A unwinds RNA secondary structures in the 5'-UTR of mRNAs which is necessary to allow efficient binding of the small ribosomal subunit, and subsequent scanning for the initiator codon. The protein is ATP-dependent RNA helicase eIF4A (TIF1) of Coccidioides immitis (strain RS) (Valley fever fungus).